The sequence spans 480 residues: MSRKLSHLIATRKSKTIVVTVLLIYSLLTFHLSNKRLLSQFYPSKDDFKQTLLPTTSHSQDINLKKQITVNKKKNQLHNLRDQLSFAFPYDSQAPIPQRVWQTWKVGADDKNFPSSFRTYQKTWSGSYSPDYQYSLISDDSIIPFLENLYAPVPIVIQAFKLMPGNILKADFLRYLLLFARGGIYSDMDTMLLKPIDSWPSQNKSWLNNIIDLNKPIPYKNSKPSLLSSDEISHQPGLVIGIEADPDRDDWSEWYARRIQFCQWTIQAKPGHPILRELILNITATTLASVQNPGVPVSEMIDPRFEEDYNVNYRHKRRHDETYKHSELKNNKNVDGSDIMNWTGPGIFSDIIFEYMNNVLRYNSDILLINPNLNKNDEEGSESATTPAKDVDNDTLSKSTRKFYKKISESLQSSNSMPWEFFSFLKEPVIVDDVMVLPITSFSPDVGQMGAQSSDDKMAFVKHMFSGSWKEDADKNAGHK.

Topologically, residues Met1 to Lys15 are cytoplasmic. The chain crosses the membrane as a helical; Signal-anchor for type II membrane protein span at residues Thr16–Phe30. The Lumenal portion of the chain corresponds to His31 to Lys480. Residues Asp187–Asp189 carry the DXD motif motif. Residues Asn203, Asn281, Asn341, and Asn393 are each glycosylated (N-linked (GlcNAc...) asparagine).

It belongs to the glycosyltransferase 32 family. Mn(2+) serves as cofactor. Glycosylated.

It localises to the endoplasmic reticulum membrane. The protein localises to the golgi apparatus membrane. It carries out the reaction Transfers an alpha-D-mannosyl residue from GDP-mannose into lipid-linked oligosaccharide, forming an alpha-(1-&gt;6)-D-mannosyl-D-mannose linkage.. Mannosyltransferase involved in outer chain elongation of asparagine-linked oligosaccharides of the type Man(9)GlcNAc(2). Adds the first alpha-1,6-mannose to the Man(8)GlcNAc(2) and Man(9)GlcNAc(2), but not Man(5)GlcNAc(2), endoplasmic reticulum intermediates. Represents the first enzymatic event required for synthesis of outer chain mannose linkages on yeast secretory proteins. Also has the potential to transfer a second alpha-1,6-mannose to the Man(8)GlcNAc(2) core oligosaccharide. In Saccharomyces cerevisiae (strain ATCC 204508 / S288c) (Baker's yeast), this protein is Initiation-specific alpha-1,6-mannosyltransferase.